A 589-amino-acid chain; its full sequence is Probable translation initiation factor IF-2 (589 aa).

In terms of domain architecture, tr-type G spans 4–225; it reads VRSPFVVVMG…AGVSQRFIPR (222 aa). The tract at residues 13–20 is G1; it reads GHVDVGKT. Residue 13 to 20 participates in GTP binding; it reads GHVDVGKT. The interval 38 to 42 is G2; the sequence is MITQH. The G3 stretch occupies residues 79–82; it reads DTPG. GTP-binding positions include 79–83 and 133–136; these read DTPGH and NKLD. Residues 133-136 are G4; it reads NKLD. The segment at 201-203 is G5; sequence SAV.

The protein belongs to the TRAFAC class translation factor GTPase superfamily. Classic translation factor GTPase family. IF-2 subfamily.

In terms of biological role, function in general translation initiation by promoting the binding of the formylmethionine-tRNA to ribosomes. Seems to function along with eIF-2. This Pyrobaculum aerophilum (strain ATCC 51768 / DSM 7523 / JCM 9630 / CIP 104966 / NBRC 100827 / IM2) protein is Probable translation initiation factor IF-2.